Consider the following 986-residue polypeptide: MSKTRVYELAQQMGIDNKELMARLADAGVSVKNHMAVLEDSDIKALSAPAQTPHKEVSQEEVRVKPTLIRRRAKAVEPEAASAEAASAPAAQEEAPQKAEPEKVEAEKAEAPKPRQAAEPVRARIIEAAPVPKPAAAPAEAAKPEKAKPAEPAPVAAAPKAAEAPAAPAAEAAPAAPAPAEAPVAKPAAKLEASAPAAPAAPAAAAPVEAQAPAKAEEQEPEKATPTRARILGRVEIPIPAQRPAERREYQRTAPGERPAPRPGMPRGVERPGTERPAPRPGGPRPAGAPGRPGERPTTGRPGGPTGGRPDRPAPLAPIDAPPLLGDDRRKGRKPAPAGGTDYAKNGKKGAPAAAGKGKKDSFKDILDKRERVFEPGPRSKGRKGKYEKVQIGKKTEITVPKAIKRIIKISESITVGELAKRMGIKATDLIRALMKLGVMATINHPLDFDTATLLATDFGYEIENVALDVDEILEAEPDTPESLLKRPPVVTIMGHVDHGKTSLLDAIREANVIAGEAGGITQHIGAYDVELNGKKITFLDTPGHEAFTAMRARGAKVTDIVILVVAADDGVMPQTREAVNHSKAAGVPIIVAINKIDKPDASPGKVKQELMEFGLVSEEWGGETIFVEVSAKKRINLESLLEMVLLQADVLELRANPDKPARGTIVEAKLDKGRGPVATVLVQEGTLKSGDYFVAGVHYGRVRAMQNDRGEKVLAAGPAMPVEVIGFNGVPDAGDIFVAMGDEKQAKEIANHRQMKLRESELAKHSKLSLEQLYEKIQKGEVKDLNAIVKGDVQGSVEAVAESLRKLSTDAIRLNVLHASVGAITETDVNLASASNAIILGFNVRPEVKAAALAEKEGVDVRLYNIIYDAVDDIKKAMEGLLEPTFKEKYLGRAEIREVFSVPKAGMVAGSYVTDGKIVRNAQVRLLRDNMVVYEGKLGSLRRFKDDVKEVATGYECGMSLENYNDLKIGDIFECFEMEKVAGKL.

The disordered stretch occupies residues 47–388 (SAPAQTPHKE…RSKGRKGKYE (342 aa)). Residues 53 to 64 (PHKEVSQEEVRV) show a composition bias toward basic and acidic residues. Low complexity predominate over residues 78–94 (PEAASAEAASAPAAQEE). The segment covering 95–113 (APQKAEPEKVEAEKAEAPK) has biased composition (basic and acidic residues). Composition is skewed to low complexity over residues 127–141 (EAAP…PAEA) and 153–214 (APVA…QAPA). Composition is skewed to basic and acidic residues over residues 215 to 225 (KAEEQEPEKAT) and 268 to 278 (GVERPGTERPA). Residues 286-300 (PAGAPGRPGERPTTG) show a composition bias toward low complexity. Positions 358–374 (GKKDSFKDILDKRERVF) are enriched in basic and acidic residues. In terms of domain architecture, tr-type G spans 486 to 653 (KRPPVVTIMG…MVLLQADVLE (168 aa)). The G1 stretch occupies residues 495-502 (GHVDHGKT). Residue 495 to 502 (GHVDHGKT) participates in GTP binding. The tract at residues 520-524 (GITQH) is G2. The G3 stretch occupies residues 541-544 (DTPG). GTP is bound by residues 541-545 (DTPGH) and 595-598 (NKID). Residues 595 to 598 (NKID) form a G4 region. A G5 region spans residues 631-633 (SAK).

This sequence belongs to the TRAFAC class translation factor GTPase superfamily. Classic translation factor GTPase family. IF-2 subfamily.

The protein resides in the cytoplasm. One of the essential components for the initiation of protein synthesis. Protects formylmethionyl-tRNA from spontaneous hydrolysis and promotes its binding to the 30S ribosomal subunits. Also involved in the hydrolysis of GTP during the formation of the 70S ribosomal complex. The chain is Translation initiation factor IF-2 from Citrifermentans bemidjiense (strain ATCC BAA-1014 / DSM 16622 / JCM 12645 / Bem) (Geobacter bemidjiensis).